Here is a 252-residue protein sequence, read N- to C-terminus: Autophagy-related protein 27 (252 aa).

The signal sequence occupies residues 1–15 (MILASLLTFATAALA). Residues 16-161 (FDCSDKELER…SMKTKAACIT (146 aa)) enclose the MRH domain. Over 16–176 (FDCSDKELER…KKEKHDNGES (161 aa)) the chain is Lumenal. 3 cysteine pairs are disulfide-bonded: C18–C57, C66–C73, and C130–C159. N49 carries N-linked (GlcNAc...) asparagine glycosylation. Residues 177-197 (WGWFTWIFIFLVLFLSIYIIG) form a helical membrane-spanning segment. The Cytoplasmic segment spans residues 198-252 (GAWFQYNKGNAIDFQSALKEVVENFIELLKGLPSFGKEIIEKFTGRSNRGEYSAV).

The protein belongs to the ATG27 family.

It localises to the cytoplasmic vesicle membrane. The protein resides in the golgi apparatus membrane. It is found in the mitochondrion membrane. The protein localises to the preautophagosomal structure membrane. Plays a key role in autophagy. Effector of VPS34 phosphatidylinositol 3-phosphate kinase signaling. Regulates the cytoplasm to vacuole transport (Cvt) vesicle formation. Plays a role in ATG protein retrieval from the pre-autophagosomal structure (PAS) and is especially required for autophagy-dependent cycling of ATG9. Finally, plays an important role in biofilm formation and resistance to antifungal compounds such as fluconazole, itraconazole, terbinafine and caspofungin. The protein is Autophagy-related protein 27 of Candida albicans (strain SC5314 / ATCC MYA-2876) (Yeast).